The chain runs to 205 residues: Probable thymidylate kinase (205 aa).

Glycine 10 to threonine 17 lines the ATP pocket.

The protein belongs to the thymidylate kinase family.

The catalysed reaction is dTMP + ATP = dTDP + ADP. The sequence is that of Probable thymidylate kinase (tmk) from Pyrococcus abyssi (strain GE5 / Orsay).